We begin with the raw amino-acid sequence, 724 residues long: Phenylalanine ammonia-lyase (724 aa).

Residue Y91 is the Proton donor/acceptor of the active site. Residues 205–207 (ASG) constitute a cross-link (5-imidazolinone (Ala-Gly)). At S206 the chain carries 2,3-didehydroalanine (Ser). (E)-cinnamate contacts are provided by N265, Q357, R363, N393, K467, E495, and N498.

The protein belongs to the PAL/histidase family. In terms of assembly, homotetramer. Post-translationally, contains an active site 4-methylidene-imidazol-5-one (MIO), which is formed autocatalytically by cyclization and dehydration of residues Ala-Ser-Gly.

The protein localises to the cytoplasm. It carries out the reaction L-phenylalanine = (E)-cinnamate + NH4(+). It participates in phenylpropanoid metabolism; trans-cinnamate biosynthesis; trans-cinnamate from L-phenylalanine: step 1/1. Catalyzes the non-oxidative deamination of L-phenylalanine to form trans-cinnamic acid and a free ammonium ion. Facilitates the commitment step in phenylpropanoid pathways that produce secondary metabolites such as lignins, coumarins and flavonoids. The sequence is that of Phenylalanine ammonia-lyase (PAL1) from Mycosarcoma maydis (Corn smut fungus).